The chain runs to 91 residues: Large ribosomal subunit protein uL23 (91 aa).

It belongs to the universal ribosomal protein uL23 family. As to quaternary structure, part of the 50S ribosomal subunit. Contacts protein L29, and trigger factor when it is bound to the ribosome.

In terms of biological role, one of the early assembly proteins it binds 23S rRNA. One of the proteins that surrounds the polypeptide exit tunnel on the outside of the ribosome. Forms the main docking site for trigger factor binding to the ribosome. This Staphylococcus epidermidis (strain ATCC 35984 / DSM 28319 / BCRC 17069 / CCUG 31568 / BM 3577 / RP62A) protein is Large ribosomal subunit protein uL23.